The chain runs to 159 residues: MEQSRQNLQSQFFIEHILQILPHRYPMLLVDRIIELQANQKIVAYKNITFNEDVFNGHFPNKPIFPGVLIVEGMAQSGGFLAFTSLWGFDPEIAKTKIVYFMTIDKVKFRIPVTPGDRLEYHLEVLKHKGMIWQVGGTAQVDGKVVAEAELKAMIAERE.

Histidine 58 is a catalytic residue.

The protein belongs to the thioester dehydratase family. FabZ subfamily.

Its subcellular location is the cytoplasm. It carries out the reaction a (3R)-hydroxyacyl-[ACP] = a (2E)-enoyl-[ACP] + H2O. Involved in unsaturated fatty acids biosynthesis. Catalyzes the dehydration of short chain beta-hydroxyacyl-ACPs and long chain saturated and unsaturated beta-hydroxyacyl-ACPs. This is 3-hydroxyacyl-[acyl-carrier-protein] dehydratase FabZ from Helicobacter pylori (strain P12).